A 322-amino-acid polypeptide reads, in one-letter code: Cysteine protease YopT (322 aa).

Catalysis depends on residues Cys139, His258, and Asp274.

The protein belongs to the peptidase C58 family. As to quaternary structure, interacts with human ARHA.

The protein localises to the secreted. Cysteine protease, which is translocated into infected cells and plays a central role in pathogenesis by cleaving the C-terminus end of the human small GTPase RhoA/ARHA, a regulator of cytoskeleton. Once cleaved, ARHA loses its lipid modification, and is released from the cell membrane, leading to the subsequent disruption of actin cytoskeleton of the host cell. The sequence is that of Cysteine protease YopT (yopT) from Yersinia pestis.